The chain runs to 144 residues: MTNIFKDSRRDLRERAFQTLFALEFGGEALDQAYFAYTYDKPIDEETEVDLPSFLLSLVTGVREELPQLDSQIEEKLKEGWSLSRLIMTDRTLLRLGLYEITSFEETPGRVAINEIIEIAKKYSDKTSAKFINGVLSQFVTDEA.

It belongs to the NusB family.

Involved in transcription antitermination. Required for transcription of ribosomal RNA (rRNA) genes. Binds specifically to the boxA antiterminator sequence of the ribosomal RNA (rrn) operons. In Streptococcus thermophilus (strain CNRZ 1066), this protein is Transcription antitermination protein NusB.